Here is a 140-residue protein sequence, read N- to C-terminus: Protein YwqH (140 aa).

A coiled-coil region spans residues 6–51; that stretch reads MLADIKSSLNGKISDVEDKIEKLKKAKKDIDTLQEEAITEIKEIVK.

The protein is Protein YwqH (ywqH) of Bacillus subtilis (strain 168).